Reading from the N-terminus, the 261-residue chain is Cytochrome c oxidase subunit 3 (261 aa).

Topologically, residues 1–15 (MTHQTHAYHMVNPSP) are mitochondrial matrix. Residues 16-34 (WPLTGALSALLMTSGLIMW) traverse the membrane as a helical segment. At 35 to 40 (FHFNST) the chain is on the mitochondrial intermembrane side. A helical membrane pass occupies residues 41-66 (ALLMLGLTTNMLTMYQWWRDIVREST). The Mitochondrial matrix segment spans residues 67-72 (FQGHHT). Residues 73 to 105 (PTVQKGLRYGMILFIISEVLFFTGFFWAFYHSS) form a helical membrane-spanning segment. Over 106–128 (LAPTPELGGCWPPTGIHPLNPLE) the chain is Mitochondrial intermembrane. Residues 129 to 152 (VPLLNTSVLLASGVSITWAHHSLM) traverse the membrane as a helical segment. The Mitochondrial matrix portion of the chain corresponds to 153-155 (EGN). A helical membrane pass occupies residues 156–183 (RNHMLQALFITIALGVYFTLLQASEYYE). At 184–190 (APFTISD) the chain is on the mitochondrial intermembrane side. A helical membrane pass occupies residues 191 to 223 (GVYGSTFFVATGFHGLHVIIGSTFLIVCFFRQL). Topologically, residues 224-232 (KFHFTSNHH) are mitochondrial matrix. Residues 233–256 (FGFEAAAWYWHFVDVVWLFLYVSI) form a helical membrane-spanning segment. Topologically, residues 257–261 (YWWGS) are mitochondrial intermembrane.

Belongs to the cytochrome c oxidase subunit 3 family. In terms of assembly, component of the cytochrome c oxidase (complex IV, CIV), a multisubunit enzyme composed of 14 subunits. The complex is composed of a catalytic core of 3 subunits MT-CO1, MT-CO2 and MT-CO3, encoded in the mitochondrial DNA, and 11 supernumerary subunits COX4I, COX5A, COX5B, COX6A, COX6B, COX6C, COX7A, COX7B, COX7C, COX8 and NDUFA4, which are encoded in the nuclear genome. The complex exists as a monomer or a dimer and forms supercomplexes (SCs) in the inner mitochondrial membrane with NADH-ubiquinone oxidoreductase (complex I, CI) and ubiquinol-cytochrome c oxidoreductase (cytochrome b-c1 complex, complex III, CIII), resulting in different assemblies (supercomplex SCI(1)III(2)IV(1) and megacomplex MCI(2)III(2)IV(2)).

The protein resides in the mitochondrion inner membrane. The enzyme catalyses 4 Fe(II)-[cytochrome c] + O2 + 8 H(+)(in) = 4 Fe(III)-[cytochrome c] + 2 H2O + 4 H(+)(out). Functionally, component of the cytochrome c oxidase, the last enzyme in the mitochondrial electron transport chain which drives oxidative phosphorylation. The respiratory chain contains 3 multisubunit complexes succinate dehydrogenase (complex II, CII), ubiquinol-cytochrome c oxidoreductase (cytochrome b-c1 complex, complex III, CIII) and cytochrome c oxidase (complex IV, CIV), that cooperate to transfer electrons derived from NADH and succinate to molecular oxygen, creating an electrochemical gradient over the inner membrane that drives transmembrane transport and the ATP synthase. Cytochrome c oxidase is the component of the respiratory chain that catalyzes the reduction of oxygen to water. Electrons originating from reduced cytochrome c in the intermembrane space (IMS) are transferred via the dinuclear copper A center (CU(A)) of subunit 2 and heme A of subunit 1 to the active site in subunit 1, a binuclear center (BNC) formed by heme A3 and copper B (CU(B)). The BNC reduces molecular oxygen to 2 water molecules using 4 electrons from cytochrome c in the IMS and 4 protons from the mitochondrial matrix. The chain is Cytochrome c oxidase subunit 3 (MT-CO3) from Cephalophorus natalensis (Natal red duiker).